Reading from the N-terminus, the 2282-residue chain is Cation channel sperm-associated targeting subunit tau (2282 aa).

A disordered region spans residues 1 to 118 (MELPPPGNRR…RGKGKGTGTR (118 aa)). 2 stretches are compositionally biased toward polar residues: residues 11-41 (VSIN…SLKR) and 50-87 (MMSN…NLSS). Basic and acidic residues predominate over residues 90–109 (YADEEGKPLTDKNKDKDKGR). The 136-residue stretch at 131 to 266 (QSDEMAIANQ…IQKGCFTEVM (136 aa)) folds into the C2 domain. Disordered stretches follow at residues 397–416 (MTKR…SSAL), 656–679 (EHED…TWAE), 747–1066 (NKLI…SHDP), 1104–1153 (SAKS…DKQS), 1217–1240 (YTND…TDDR), 1426–1445 (NSLL…DSRS), 1452–1515 (RQNT…SLDK), 1542–1569 (ERRQ…LEKT), 1908–1928 (NQAN…LKKQ), and 2187–2222 (PKKS…EPNK). Polar residues-rich tracts occupy residues 750–760 (ITDSSFNTTKP), 783–792 (SDPSSNTTKP), 800–841 (DPSS…SDLN), 849–858 (IVSTISSDPN), and 953–974 (SARS…TKLS). Over residues 1104–1123 (SAKSLDSNNSSASSSPTVNS) the composition is skewed to low complexity. Polar residues predominate over residues 1124 to 1136 (DTTTNAAEPSGTK). Composition is skewed to polar residues over residues 1452–1466 (RQNT…SSVS) and 1473–1482 (DCQSISTQES). Positions 1484–1493 (YPVRDTKSDS) are enriched in basic and acidic residues. Residues 1495 to 1504 (NDTEEMELDS) show a composition bias toward acidic residues. Composition is skewed to basic and acidic residues over residues 1542–1555 (ERRQ…ESLI) and 1916–1925 (SPERPSDISL).

Component of the CatSper complex or CatSpermasome composed of the core pore-forming members CATSPER1, CATSPER2, CATSPER3 and CATSPER4 as well as auxiliary members CATSPERB, CATSPERG, CATSPERD, CATSPERE, CATSPERZ, C2CD6/CATSPERT, SLCO6C1, TMEM249, TMEM262 and EFCAB9. HSPA1 may be an additional auxiliary complex member. The core complex members CATSPER1, CATSPER2, CATSPER3 and CATSPER4 form a heterotetrameric channel. The auxiliary CATSPERB, CATSPERG, CATSPERD and CATSPERE subunits form a pavilion-like structure over the pore which stabilizes the complex through interactions with CATSPER4, CATSPER3, CATSPER1 and CATSPER2 respectively. SLCO6C1 interacts with CATSPERE and TMEM262/CATSPERH interacts with CATSPERB, further stabilizing the complex. C2CD6/CATSPERT interacts at least with CATSPERD and is required for targeting the CatSper complex in the flagellar membrane. As to expression, expressed in cauda sperm (at protein level).

The protein resides in the cell projection. The protein localises to the cilium. Its subcellular location is the flagellum membrane. Functionally, auxiliary component of the CatSper complex, a complex involved in sperm cell hyperactivation. Sperm cell hyperactivation is needed for sperm motility which is essential late in the preparation of sperm for fertilization. Required for CatSper complex targeting and trafficking into the quadrilinear nanodomains. Targets the preassembled CatSper complexes to elongating flagella, where it links the channel-carrying vesicles and motor proteins. The polypeptide is Cation channel sperm-associated targeting subunit tau (Mus musculus (Mouse)).